The primary structure comprises 354 residues: 3-dehydroquinate synthase (354 aa).

Residues 100-104 (GATGD), 124-125 (TT), K136, K145, and 163-166 (FLKT) each bind NAD(+). Positions 178, 242, and 256 each coordinate Zn(2+).

Belongs to the sugar phosphate cyclases superfamily. Dehydroquinate synthase family. NAD(+) is required as a cofactor. It depends on Co(2+) as a cofactor. The cofactor is Zn(2+).

It localises to the cytoplasm. It carries out the reaction 7-phospho-2-dehydro-3-deoxy-D-arabino-heptonate = 3-dehydroquinate + phosphate. It participates in metabolic intermediate biosynthesis; chorismate biosynthesis; chorismate from D-erythrose 4-phosphate and phosphoenolpyruvate: step 2/7. Functionally, catalyzes the conversion of 3-deoxy-D-arabino-heptulosonate 7-phosphate (DAHP) to dehydroquinate (DHQ). This is 3-dehydroquinate synthase from Staphylococcus aureus (strain Mu50 / ATCC 700699).